Consider the following 509-residue polypeptide: GMP synthase [glutamine-hydrolyzing] (509 aa).

The Glutamine amidotransferase type-1 domain occupies 4–193 (NVLILDFGSQ…LVKIAQVPQN (190 aa)). Cysteine 79 (nucleophile) is an active-site residue. Residues histidine 167 and glutamate 169 contribute to the active site. The 191-residue stretch at 194-384 (FTPNAFVSDM…LGIDAELLGR (191 aa)) folds into the GMPS ATP-PPase domain. An ATP-binding site is contributed by 221-227 (SGGVDST).

Homodimer.

It carries out the reaction XMP + L-glutamine + ATP + H2O = GMP + L-glutamate + AMP + diphosphate + 2 H(+). Its pathway is purine metabolism; GMP biosynthesis; GMP from XMP (L-Gln route): step 1/1. In terms of biological role, catalyzes the synthesis of GMP from XMP. The protein is GMP synthase [glutamine-hydrolyzing] of Flavobacterium psychrophilum (strain ATCC 49511 / DSM 21280 / CIP 103535 / JIP02/86).